A 102-amino-acid polypeptide reads, in one-letter code: Integration host factor subunit beta (102 aa).

It belongs to the bacterial histone-like protein family. Heterodimer of an alpha and a beta chain.

This protein is one of the two subunits of integration host factor, a specific DNA-binding protein that functions in genetic recombination as well as in transcriptional and translational control. In Marinomonas sp. (strain MWYL1), this protein is Integration host factor subunit beta.